The chain runs to 138 residues: Flagellar assembly factor FliW (138 aa).

This sequence belongs to the FliW family. In terms of assembly, interacts with translational regulator CsrA and flagellin(s).

Its subcellular location is the cytoplasm. Its function is as follows. Acts as an anti-CsrA protein, binds CsrA and prevents it from repressing translation of its target genes, one of which is flagellin. Binds to flagellin and participates in the assembly of the flagellum. This chain is Flagellar assembly factor FliW, found in Symbiobacterium thermophilum (strain DSM 24528 / JCM 14929 / IAM 14863 / T).